The following is a 237-amino-acid chain: Phosphoribosylaminoimidazole-succinocarboxamide synthase (237 aa).

This sequence belongs to the SAICAR synthetase family.

It carries out the reaction 5-amino-1-(5-phospho-D-ribosyl)imidazole-4-carboxylate + L-aspartate + ATP = (2S)-2-[5-amino-1-(5-phospho-beta-D-ribosyl)imidazole-4-carboxamido]succinate + ADP + phosphate + 2 H(+). It functions in the pathway purine metabolism; IMP biosynthesis via de novo pathway; 5-amino-1-(5-phospho-D-ribosyl)imidazole-4-carboxamide from 5-amino-1-(5-phospho-D-ribosyl)imidazole-4-carboxylate: step 1/2. The polypeptide is Phosphoribosylaminoimidazole-succinocarboxamide synthase (Erwinia tasmaniensis (strain DSM 17950 / CFBP 7177 / CIP 109463 / NCPPB 4357 / Et1/99)).